Here is a 154-residue protein sequence, read N- to C-terminus: Large ribosomal subunit protein uL30 (154 aa).

The tract at residues 114–146 (PTLRLHPPRGGHDGVKHPVKEGGQLGKHDTEGI) is disordered. A compositionally biased stretch (basic and acidic residues) spans 123–144 (GGHDGVKHPVKEGGQLGKHDTE).

Belongs to the universal ribosomal protein uL30 family. Part of the 50S ribosomal subunit. Binds 5S rRNA.

Its function is as follows. This is one of 5 proteins that mediate the attachment of the 5S rRNA onto the large ribosomal subunit, stabilizing the orientation of adjacent RNA domains. The polypeptide is Large ribosomal subunit protein uL30 (Haloarcula marismortui (strain ATCC 43049 / DSM 3752 / JCM 8966 / VKM B-1809) (Halobacterium marismortui)).